The primary structure comprises 254 residues: Fructose-1,6-bisphosphatase (254 aa).

4 residues coordinate Mg(2+): Glu68, Asp84, Leu86, and Asp87. Residues 87 to 89 (DGS), Arg171, Ile176, and Arg195 each bind substrate. A Mg(2+)-binding site is contributed by Asp202.

This sequence belongs to the inositol monophosphatase superfamily. FBPase class 4 family. As to quaternary structure, homodimer. Mg(2+) serves as cofactor.

It catalyses the reaction beta-D-fructose 1,6-bisphosphate + H2O = beta-D-fructose 6-phosphate + phosphate. Its activity is regulated as follows. Inhibited by Li(+), ADP, ATP and glucose-6-phosphate. Functionally, catalyzes the conversion of D-fructose 1,6-bisphosphate to D-fructose 6-phosphate. In vitro, also has weak activity with inositol-1-phosphate, glucose-1-phosphate and glycerol-2-phosphate. This is Fructose-1,6-bisphosphatase from Pyrococcus furiosus (strain ATCC 43587 / DSM 3638 / JCM 8422 / Vc1).